The following is a 276-amino-acid chain: Outer plastidial membrane protein porin (276 aa).

The protein belongs to the eukaryotic mitochondrial porin (TC 1.B.8.1) family.

Its subcellular location is the plastid outer membrane. Forms a channel through the cell membrane that allows diffusion of small hydrophilic molecules. The channel adopts an open conformation at low or zero membrane potential and a closed conformation at potentials above 30-40 mV. The open state has a weak anion selectivity whereas the closed state is cation-selective. The polypeptide is Outer plastidial membrane protein porin (POR1) (Pisum sativum (Garden pea)).